Reading from the N-terminus, the 281-residue chain is 2,3,4,5-tetrahydropyridine-2,6-dicarboxylate N-succinyltransferase (281 aa).

Substrate-binding residues include Arg108 and Asp145.

This sequence belongs to the transferase hexapeptide repeat family. As to quaternary structure, homotrimer.

The protein localises to the cytoplasm. The catalysed reaction is (S)-2,3,4,5-tetrahydrodipicolinate + succinyl-CoA + H2O = (S)-2-succinylamino-6-oxoheptanedioate + CoA. It functions in the pathway amino-acid biosynthesis; L-lysine biosynthesis via DAP pathway; LL-2,6-diaminopimelate from (S)-tetrahydrodipicolinate (succinylase route): step 1/3. The polypeptide is 2,3,4,5-tetrahydropyridine-2,6-dicarboxylate N-succinyltransferase (Rhodopseudomonas palustris (strain BisA53)).